Reading from the N-terminus, the 235-residue chain is MKGFFVTGTDTGVGKTFIACGLAALLKEQHVDVGVFKPFLSGELASDPQSDTALLKNMSETPLTDEEVTPFIFKEPLAPYTAAKLEGRTVGLEDAVNHWKKIKDRHECFIVEGAGGIAVPLGEDYFVSDLIKALDLPAVIVARPNLGTINHTYLTAQYAKQMGIRVIGIVINGISSRPGLDEQTNPDMIERFCGVPLLGVTPKLEDASPTQIHHMIKDHVDVSLIMNQMQMGAEK.

12 to 17 (GVGKTF) is an ATP binding site. T16 is a binding site for Mg(2+). The active site involves K37. Position 41 (S41) interacts with substrate. Residues D51, 112–115 (EGAG), and 202–204 (PKL) contribute to the ATP site. The Mg(2+) site is built by D51 and E112.

It belongs to the dethiobiotin synthetase family. Homodimer. The cofactor is Mg(2+).

It localises to the cytoplasm. The catalysed reaction is (7R,8S)-7,8-diammoniononanoate + CO2 + ATP = (4R,5S)-dethiobiotin + ADP + phosphate + 3 H(+). The protein operates within cofactor biosynthesis; biotin biosynthesis; biotin from 7,8-diaminononanoate: step 1/2. Catalyzes a mechanistically unusual reaction, the ATP-dependent insertion of CO2 between the N7 and N8 nitrogen atoms of 7,8-diaminopelargonic acid (DAPA, also called 7,8-diammoniononanoate) to form a ureido ring. This is ATP-dependent dethiobiotin synthetase BioD from Bacillus licheniformis (strain ATCC 14580 / DSM 13 / JCM 2505 / CCUG 7422 / NBRC 12200 / NCIMB 9375 / NCTC 10341 / NRRL NRS-1264 / Gibson 46).